Reading from the N-terminus, the 134-residue chain is Holo-[acyl-carrier-protein] synthase (134 aa).

Mg(2+)-binding residues include D8 and E57.

The protein belongs to the P-Pant transferase superfamily. AcpS family. It depends on Mg(2+) as a cofactor.

Its subcellular location is the cytoplasm. It catalyses the reaction apo-[ACP] + CoA = holo-[ACP] + adenosine 3',5'-bisphosphate + H(+). Functionally, transfers the 4'-phosphopantetheine moiety from coenzyme A to a Ser of acyl-carrier-protein. The polypeptide is Holo-[acyl-carrier-protein] synthase (Roseobacter denitrificans (strain ATCC 33942 / OCh 114) (Erythrobacter sp. (strain OCh 114))).